Reading from the N-terminus, the 558-residue chain is Putative transposase for insertion sequence IS1162 (558 aa).

The HTH IS408-type domain occupies 11 to 93 (IKECLRLKFE…PDLITIHREL (83 aa)). The segment at residues 23-44 (LSHEKIARALQLSKGVVSKYVT) is a DNA-binding region (H-T-H motif). One can recognise an Integrase catalytic domain in the interval 139-336 (QQHRAGEKLF…HPYEVVTFKR (198 aa)). Residues 486-558 (QGLDQQPLPK…AAGQPQPELR (73 aa)) form a disordered region.

The protein belongs to the transposase IS21/IS408/IS1162 family.

In terms of biological role, required for the transposition of the insertion element. The protein is Putative transposase for insertion sequence IS1162 of Pseudomonas fluorescens.